We begin with the raw amino-acid sequence, 408 residues long: D-galactonate dehydratase family member OG2516_05608 (408 aa).

Aspartate 215 contributes to the Mg(2+) binding site. Position 217 (histidine 217) interacts with D-arabinonate. The Mg(2+) site is built by glutamate 241 and glutamate 267. D-arabinonate-binding residues include glutamate 267, arginine 288, histidine 317, and glutamate 344.

Belongs to the mandelate racemase/muconate lactonizing enzyme family. GalD subfamily.

Functionally, has no detectable activity with D-mannonate and with a panel of 70 other acid sugars (in vitro), in spite of the conservation of the residues that are expected to be important for catalytic activity and cofactor binding. May have evolved a divergent function. This Oceanicola granulosus (strain ATCC BAA-861 / DSM 15982 / KCTC 12143 / HTCC2516) protein is D-galactonate dehydratase family member OG2516_05608.